The following is a 120-amino-acid chain: Kidney androgen-regulated protein (120 aa).

A signal peptide spans 1 to 18 (MMICKVLVITVFCVLTVA).

Its subcellular location is the secreted. The chain is Kidney androgen-regulated protein (Kap) from Rattus norvegicus (Rat).